Reading from the N-terminus, the 99-residue chain is Aspartyl/glutamyl-tRNA(Asn/Gln) amidotransferase subunit C (99 aa).

It belongs to the GatC family. Heterotrimer of A, B and C subunits.

It catalyses the reaction L-glutamyl-tRNA(Gln) + L-glutamine + ATP + H2O = L-glutaminyl-tRNA(Gln) + L-glutamate + ADP + phosphate + H(+). The enzyme catalyses L-aspartyl-tRNA(Asn) + L-glutamine + ATP + H2O = L-asparaginyl-tRNA(Asn) + L-glutamate + ADP + phosphate + 2 H(+). Functionally, allows the formation of correctly charged Asn-tRNA(Asn) or Gln-tRNA(Gln) through the transamidation of misacylated Asp-tRNA(Asn) or Glu-tRNA(Gln) in organisms which lack either or both of asparaginyl-tRNA or glutaminyl-tRNA synthetases. The reaction takes place in the presence of glutamine and ATP through an activated phospho-Asp-tRNA(Asn) or phospho-Glu-tRNA(Gln). In Solibacter usitatus (strain Ellin6076), this protein is Aspartyl/glutamyl-tRNA(Asn/Gln) amidotransferase subunit C.